The sequence spans 181 residues: CASP-like protein 2C1 (181 aa).

The Cytoplasmic portion of the chain corresponds to 1-7; the sequence is MALEIPK. Residues 8–28 traverse the membrane as a helical segment; it reads IEAILRGIAILLLVSTACLVG. Over 29 to 49 the chain is Extracellular; it reads LDSQTKFVIVYEKEVTYKDLH. Residues 50–70 traverse the membrane as a helical segment; the sequence is ALVVLVYVDAVAAAYNLLQLC. At 71–98 the chain is on the cytoplasmic side; it reads RCSVSALSKGNFKGSYRYLSWACFVLDQ. Residues 99–119 traverse the membrane as a helical segment; sequence LAAYTTFAAHSAALQHSVLGI. Topologically, residues 120–140 are extracellular; the sequence is TGAKVFQWMKWCNRFTRFCFQ. The chain crosses the membrane as a helical span at residues 141-161; sequence IGGALTCGYIASVLMVMISFI. The Cytoplasmic segment spans residues 162 to 181; sequence SAFNLFRLYSPKHFLRLKGT.

Belongs to the Casparian strip membrane proteins (CASP) family. As to quaternary structure, homodimer and heterodimers.

The protein resides in the cell membrane. This Populus trichocarpa (Western balsam poplar) protein is CASP-like protein 2C1.